The sequence spans 215 residues: Kunitz trypsin inhibitor 2 (215 aa).

The signal sequence occupies residues M1–G23. Cysteines 67 and 114 form a disulfide. Residue N145 is glycosylated (N-linked (GlcNAc...) asparagine).

It belongs to the protease inhibitor I3 (leguminous Kunitz-type inhibitor) family. Interacts with RD21A. Interacts with RD21B and RD21C. Expressed in vascular bundles of the carpels, the transmitting tract of the style and septum epidermis. Expressed in etiolated seedlings.

It is found in the secreted. The protein resides in the cell wall. Its subcellular location is the extracellular space. The protein localises to the apoplast. It localises to the endoplasmic reticulum. Functionally, water-soluble and chlorophyll-binding protein that probably does not function as a chloroplast chlorophyll carrier and is not involved in photosynthesis. Involved in the control of cell death in the transmitting tract and septum epidermis during flower development. Binds and inhibits the activity of the cysteine protease RD21A as a pro-death protein. May play a role in herbivore resistance activation during seedling greening. The polypeptide is Kunitz trypsin inhibitor 2 (Arabidopsis thaliana (Mouse-ear cress)).